We begin with the raw amino-acid sequence, 179 residues long: Translation initiation factor IF-3 (179 aa).

This sequence belongs to the IF-3 family. Monomer.

The protein resides in the cytoplasm. IF-3 binds to the 30S ribosomal subunit and shifts the equilibrium between 70S ribosomes and their 50S and 30S subunits in favor of the free subunits, thus enhancing the availability of 30S subunits on which protein synthesis initiation begins. The sequence is that of Translation initiation factor IF-3 from Proteus hauseri.